The sequence spans 188 residues: Cell division protein SepF (188 aa).

Belongs to the SepF family. In terms of assembly, homodimer. Interacts with FtsZ.

It is found in the cytoplasm. In terms of biological role, cell division protein that is part of the divisome complex and is recruited early to the Z-ring. Probably stimulates Z-ring formation, perhaps through the cross-linking of FtsZ protofilaments. Its function overlaps with FtsA. The chain is Cell division protein SepF from Synechococcus sp. (strain CC9605).